A 216-amino-acid polypeptide reads, in one-letter code: MTTPSSFNPQAFIELALSRGVLKFGEFTLKSGRVSPYFFNAGLLNDGEALSLLAQGYADQLMQCQHVDVIFGPAYKGIPFVAATAVALSQLHAKSVPWGFNRKEAKDHGEGGVLVGASVEGKKVWIIDDVITAGTAIREVVTILKNAGATIAGVLVALDRQERGQGQLSAIQEVQQELEIPVHALITMKDLMNYLDAKGETQALAKMEDYRLKYGI.

K30 contributes to the 5-phospho-alpha-D-ribose 1-diphosphate binding site. 38–39 (FF) is a binding site for orotate. 5-phospho-alpha-D-ribose 1-diphosphate-binding positions include 75 to 76 (YK), R102, K103, K106, H108, and 128 to 136 (DDVITAGTA). Positions 132 and 160 each coordinate orotate.

Belongs to the purine/pyrimidine phosphoribosyltransferase family. PyrE subfamily. Homodimer. Mg(2+) serves as cofactor.

It catalyses the reaction orotidine 5'-phosphate + diphosphate = orotate + 5-phospho-alpha-D-ribose 1-diphosphate. It participates in pyrimidine metabolism; UMP biosynthesis via de novo pathway; UMP from orotate: step 1/2. In terms of biological role, catalyzes the transfer of a ribosyl phosphate group from 5-phosphoribose 1-diphosphate to orotate, leading to the formation of orotidine monophosphate (OMP). The chain is Orotate phosphoribosyltransferase from Acinetobacter baylyi (strain ATCC 33305 / BD413 / ADP1).